The chain runs to 343 residues: Cytoplasmic tRNA 2-thiolation protein 1 (343 aa).

Belongs to the TtcA family. CTU1/NCS6/ATPBD3 subfamily.

Its subcellular location is the cytoplasm. It functions in the pathway tRNA modification; 5-methoxycarbonylmethyl-2-thiouridine-tRNA biosynthesis. In terms of biological role, plays a central role in 2-thiolation of mcm(5)S(2)U at tRNA wobble positions of tRNA(Lys), tRNA(Glu) and tRNA(Gln). Directly binds tRNAs and probably acts by catalyzing adenylation of tRNAs, an intermediate required for 2-thiolation. It is unclear whether it acts as a sulfurtransferase that transfers sulfur from thiocarboxylated URM1 onto the uridine of tRNAs at wobble position. This Drosophila virilis (Fruit fly) protein is Cytoplasmic tRNA 2-thiolation protein 1.